Here is a 292-residue protein sequence, read N- to C-terminus: Large ribosomal subunit protein uL4 (292 aa).

2 stretches are compositionally biased toward basic and acidic residues: residues 1-33 (MVEV…DKTA) and 42-51 (KVSDKAESTP). 2 disordered regions span residues 1 to 59 (MVEV…VKTS) and 132 to 158 (GTHK…TGKA).

The protein belongs to the universal ribosomal protein uL4 family. As to quaternary structure, part of the 50S ribosomal subunit.

In terms of biological role, one of the primary rRNA binding proteins, this protein initially binds near the 5'-end of the 23S rRNA. It is important during the early stages of 50S assembly. It makes multiple contacts with different domains of the 23S rRNA in the assembled 50S subunit and ribosome. Forms part of the polypeptide exit tunnel. In Mycoplasmopsis pulmonis (strain UAB CTIP) (Mycoplasma pulmonis), this protein is Large ribosomal subunit protein uL4.